A 205-amino-acid polypeptide reads, in one-letter code: Imidazole glycerol phosphate synthase subunit HisH (205 aa).

A Glutamine amidotransferase type-1 domain is found at 1–205; sequence MVGIVNYNIG…RILKNFCEIG (205 aa). The active-site Nucleophile is C79. Residues H186 and E188 contribute to the active site.

In terms of assembly, heterodimer of HisH and HisF.

Its subcellular location is the cytoplasm. It carries out the reaction 5-[(5-phospho-1-deoxy-D-ribulos-1-ylimino)methylamino]-1-(5-phospho-beta-D-ribosyl)imidazole-4-carboxamide + L-glutamine = D-erythro-1-(imidazol-4-yl)glycerol 3-phosphate + 5-amino-1-(5-phospho-beta-D-ribosyl)imidazole-4-carboxamide + L-glutamate + H(+). The catalysed reaction is L-glutamine + H2O = L-glutamate + NH4(+). It participates in amino-acid biosynthesis; L-histidine biosynthesis; L-histidine from 5-phospho-alpha-D-ribose 1-diphosphate: step 5/9. Functionally, IGPS catalyzes the conversion of PRFAR and glutamine to IGP, AICAR and glutamate. The HisH subunit catalyzes the hydrolysis of glutamine to glutamate and ammonia as part of the synthesis of IGP and AICAR. The resulting ammonia molecule is channeled to the active site of HisF. This chain is Imidazole glycerol phosphate synthase subunit HisH, found in Wolinella succinogenes (strain ATCC 29543 / DSM 1740 / CCUG 13145 / JCM 31913 / LMG 7466 / NCTC 11488 / FDC 602W) (Vibrio succinogenes).